Consider the following 1662-residue polypeptide: MYTNIPQQQQNIPQQQQQNIPQQQNVQNIQQPLPHTNIQQQNIQQQQQQYQLQFQKQQQQQQQQQQQQQQQQQQQQQQQQQQQQQQQQQQQQLQQQRPQTPQQNAQQQSQQSQQSQQQQASLGQGQQGSGPNTPPQSQPETIESIFKQLDLNSTGQQAKDILEQCKLKIHSLESQQLIAQAKYKLFSLAANYQSTVFQHIKMVSTTTTPTSTPTTSTTNTPQNSNTSSSSSTGTSSSTIGSSSSSTTTSTTNNENLGLPISKEIYQQKIQLWISIITFLRENLQYFGKWRESIYISIQNITQSTLLPTLIQKEFFTELFILLKSIFSFVNIEFPHYIALKEVKLSNTHQCLEYQNLIEPYYCRAAKLSSLLSLSSLSSSARIVGSSILLNQDAMIGYTNQLTESPPFFTSNRLLNNKYSTIVHHLLSQSASIEPIKELLFPQVQSNTLKSKIISIITEATISKTMQLLNKYPNQIIENQIENNSWKEWLLFSEQFYFLCENGLVDLEQFIVTLSEKRMNNGDPIKDNMVVLLISKTIIIQDVKTLFKQHLQNVNSNHYGHLIPLVLSFVNNDSNYPIISQNISLYFFLMRINTNTENPEIIAHIKKLLDNFNFQFTLFQQYRNWWESEKVKQKPEFFTTIQDITYFSIICNVIPTEGEMELIRFQSNGSDQSIQFPGVGGIGTVVTGKIKPVSNLILLNLSLRCRRKLIQESVLLLLDKEVPISPGFLEDYCRTVHYTPGPVSPFLFSYFKKFHRLAPIHAVIESVSHRLLKVLKSNKELAVLLRALQDIQTQKPIQNIQLSRSIDYLLLKASISLPVDLISAKEIWKSLDLGLFNNRRLITSIARLIKLKGIQDFNRISDVPVFIENCFKSNPYCFSKSTLEFFPDILKNEFKKNSENLSLNPNQFTNLTLMKPPTLQKVQLENQQRFQLFSVGGKLQILQKQALVQQYLTDNNSNLLLCQVFIYMLENKIKMDVMGPLIQQMFFKQIIGNQQPQQQQQPQQPPPLAISNQQLNRITSVFIDFIFDEVYVNHPLKQENLHQHVSEFLCQSIFTYKILTLNSVLLALLDRDDHPSMPTILDTFLFSSAEIQNRLQFFSTYPSDFFISQSFRNDDNYFIKNCEFNNRFNDLIPTVIDPNTLIEQSTQDTILPIYYSNSISRLMPIVEIIISKSIELNNGDLFEKTINHFNIPYHYYQDEKETTIKDTLIYYYDSQLFKLNPELKLLFLKLLNQSDIDNRFSNIFNQFLKSSRIEDITMVGSTAYFNDLISPLAEMMDLTNQNVFDTFSFKTENTFSSIDISNPLELKLNNIILEILLLPLDSNWIANGLVSLLNYSNRNKNFSDRKIDPPSSSMVLALSIIFSILPTQIHNSFIPIVTQNLSNELNFSKFKSPIMKNQYNFGNYTTNVEEKMTEPIEWYIYFIQFYYLYCPLERLLSLNDLVTNIRPLIKNVYQYYVLLTIVSPVLLRFGTQTNHLIQITREMLQILTDSYLSSYIENTLQDLESCWIGNTNDDDDIMDTTNFNLFGKRIGYDDDDDDEDDDYYDEDDEDEDDDNEDDQQDENDRMDFSQDTNNIFNRSMGDHDHLMMMSNSENLNDPWSDKNEFFRKQKSIFLKIDSQLIDTIIDWIYHIKMIFPFQPFRDELLRIVKEFKPNFLSKFNQLN.

Disordered stretches follow at residues 1-24 (MYTN…PQQQ), 95-139 (QQRP…QSQP), 206-252 (TTTP…STTN), and 1530-1572 (GYDD…QDTN). A coiled-coil region spans residues 39–122 (QQQNIQQQQQ…QQSQQQQASL (84 aa)). The segment covering 95–124 (QQRPQTPQQNAQQQSQQSQQSQQQQASLGQ) has biased composition (low complexity). Positions 1532-1560 (DDDDDDEDDDYYDEDDEDEDDDNEDDQQD) are enriched in acidic residues.

The protein belongs to the Mediator complex subunit 23 family. Component of the Mediator complex.

Its subcellular location is the nucleus. Component of the Mediator complex, a coactivator involved in the regulated transcription of nearly all RNA polymerase II-dependent genes. Mediator functions as a bridge to convey information from gene-specific regulatory proteins to the basal RNA polymerase II transcription machinery. Mediator is recruited to promoters by direct interactions with regulatory proteins and serves as a scaffold for the assembly of a functional preinitiation complex with RNA polymerase II and the general transcription factors. The protein is Putative mediator of RNA polymerase II transcription subunit 23 (med23) of Dictyostelium discoideum (Social amoeba).